We begin with the raw amino-acid sequence, 251 residues long: uncharacterized protein (251 aa).

Residues 1–18 form the signal peptide; the sequence is MRILIILSIILCSLFARA.

Belongs to the MlaA family.

This is an uncharacterized protein from Rickettsia felis (strain ATCC VR-1525 / URRWXCal2) (Rickettsia azadi).